We begin with the raw amino-acid sequence, 289 residues long: MRITGKTFRRRRADSESEEDEQESEEVRLKLEETREVQNLRKRPNGVSAAALLVGEKVQEETTLVDDPFQMATGGMVDMKKLKERGKDKVSEEEDLHLGTSFSAETNRRDEDADMMKYIETELKKRKGIVEQEEQKAKPKNAEDCLYELPENIRVSSAKKTEEMLSNQMLSGIPEVDLGIDAKIKNIISTEDAKARLLAEQQNKKKDSETSFVPTNMAVNYVQHNRFYHEELNAPIRRNKEEPKARPLRVGDTEKPEPERSPPNRKRPANEKATDDYHYEKFKKMNRRY.

2 disordered regions span residues 1-30 (MRIT…VRLK) and 85-111 (RGKD…RRDE). The interaction with SNRNP200 stretch occupies residues 5–58 (GKTFRRRRADSESEEDEQESEEVRLKLEETREVQNLRKRPNGVSAAALLVGEKV). A phosphoserine mark is found at serine 15 and serine 17. Position 147 is a phosphotyrosine (tyrosine 147). The span at 232–283 (LNAPIRRNKEEPKARPLRVGDTEKPEPERSPPNRKRPANEKATDDYHYEKFK) shows a compositional bias: basic and acidic residues. The disordered stretch occupies residues 232 to 289 (LNAPIRRNKEEPKARPLRVGDTEKPEPERSPPNRKRPANEKATDDYHYEKFKKMNRRY). The residue at position 253 (threonine 253) is a Phosphothreonine. At serine 261 the chain carries Phosphoserine.

The protein belongs to the TLS1 family. As to quaternary structure, component of the spliceosome. Interacts with SNRNP200; the interaction is direct. Interacts with PRPF8.

The protein localises to the nucleus. It is found in the chromosome. It localises to the centromere. Functionally, plays a role in pre-mRNA splicing by promoting usage of the upstream 3'-splice site at alternative NAGNAG splice sites; these are sites featuring alternative acceptor motifs separated by only a few nucleotides. May also modulate exon inclusion events. PPlays a role in spliceosomal remodeling by displacing WBP4 from SNRNP200 and may act to inhibit SNRNP200 helicase activity. Binds U5 snRNA. Required for proper chromosome segregation. Not required for splicing of shelterin components. This Mus musculus (Mouse) protein is Splicing factor C9orf78 homolog.